The sequence spans 2452 residues: Lovastatin diketide synthase lovF (2452 aa).

A Ketosynthase family 3 (KS3) domain is found at proline 10–arginine 381. Residues cysteine 173, histidine 308, and histidine 343 each act as for beta-ketoacyl synthase activity in the active site. The malonyl-CoA:ACP transacylase (MAT) domain stretch occupies residues valine 496 to lysine 790. Serine 555 functions as the For malonyltransferase activity in the catalytic mechanism. Residues histidine 861–proline 998 are N-terminal hotdog fold. The dehydratase (DH) domain stretch occupies residues histidine 861–glycine 1166. The 311-residue stretch at histidine 861 to threonine 1171 folds into the PKS/mFAS DH domain. Histidine 893 functions as the Proton acceptor; for dehydratase activity in the catalytic mechanism. Residues glutamine 997–threonine 1017 are disordered. A C-terminal hotdog fold region spans residues proline 1012–threonine 1171. Catalysis depends on aspartate 1079, which acts as the Proton donor; for dehydratase activity. The methyltransferase (CMet) domain stretch occupies residues glutamate 1343–methionine 1528. An enoylreductase (ER) domain region spans residues glycine 1745–valine 2064. Residues serine 2088–glutamine 2260 form a ketoreductase (KR) domain region. A Carrier domain is found at alanine 2373–tyrosine 2450. The residue at position 2410 (serine 2410) is an O-(pantetheine 4'-phosphoryl)serine.

In terms of assembly, interacts with LovD. The cofactor is pantetheine 4'-phosphate.

It carries out the reaction holo-[2-methylbutanoate polyketide synthase] + 2 malonyl-CoA + S-adenosyl-L-methionine + 2 NADPH + 3 H(+) = (S)-2-methylbutanoyl-[2-methylbutanoate polyketide synthase] + S-adenosyl-L-homocysteine + 2 CO2 + 2 NADP(+) + 2 CoA + H2O. It participates in polyketide biosynthesis; lovastatin biosynthesis. Its function is as follows. Lovastatin diketide synthase; part of the gene cluster that mediates the biosynthesis of lovastatin (also known as mevinolin, mevacor or monacolin K), a hypolipidemic inhibitor of (3S)-hydroxymethylglutaryl-coenzyme A (HMG-CoA) reductase (HMGR). The first step in the biosynthesis of lovastatin is the production of dihydromonacolin L acid by the lovastatin nonaketide synthase lovB and the trans-acting enoyl reductase lovC via condensation of one acetyl-CoA unit and 8 malonyl-CoA units. Dihydromonacolin L acid is released from lovB by the thioesterase lovG. Next, dihydromonacolin L acid is oxidized by the dihydromonacolin L monooxygenase lovA twice to form monacolin J acid. The 2-methylbutyrate moiety of lovastatin is synthesized by the lovastatin diketide synthase lovF via condensation of one acetyl-CoA unit and one malonyl-CoA unit. Finally, the covalent attachment of this moiety to monacolin J acid is catalyzed by the transesterase lovD to yield lovastatin. LovD has broad substrate specificity and can also convert monacolin J to simvastatin using alpha-dimethylbutanoyl-S-methyl-3-mercaptopropionate (DMB-S-MMP) as the thioester acyl donor, and can also catalyze the reverse reaction and function as hydrolase in vitro. LovD has much higher activity with LovF-bound 2-methylbutanoate than with free diketide substrates. The protein is Lovastatin diketide synthase lovF of Aspergillus terreus (strain NIH 2624 / FGSC A1156).